Reading from the N-terminus, the 307-residue chain is Taste receptor type 2 member 41 (307 aa).

Residues 1–7 are Extracellular-facing; that stretch reads MQAALTA. Residues 8–28 traverse the membrane as a helical segment; sequence FFMLLFSLLSLLGIAANGFIV. Residues 29–40 lie on the Cytoplasmic side of the membrane; the sequence is LVLGREWLRYGR. The helical transmembrane segment at 41 to 61 threads the bilayer; sequence LLPLDMILISLGASRFCLQLV. Residues 62-88 lie on the Extracellular side of the membrane; sequence GTVHNFYYSAQKVEYSGGLGRQFFHLH. Residues 89 to 109 form a helical membrane-spanning segment; sequence WHFLNSATFWFCSWLSVLFCV. The Cytoplasmic portion of the chain corresponds to 110–129; that stretch reads KIANITHPTFLWLKWRFPGW. The helical transmembrane segment at 130 to 150 threads the bilayer; sequence VPWLLLGSVLISFIITLLFFW. Topologically, residues 151–183 are extracellular; that stretch reads VNYPAYQEFLIRKFSVNMTYKWNTRIETYYFPS. N167 carries an N-linked (GlcNAc...) asparagine glycan. Residues 184–204 form a helical membrane-spanning segment; the sequence is LKLVIWSIPFSVFLVSIMLLI. Topologically, residues 205–234 are cytoplasmic; sequence NSLRRHTQRMQHNGHSLQDPSTQAHTRALK. Residues 235–255 form a helical membrane-spanning segment; sequence SLISFLILYALSFLSLIIDAT. Residues 256 to 264 are Extracellular-facing; the sequence is KFISMQNDF. The helical transmembrane segment at 265–285 threads the bilayer; that stretch reads YWPWQIAVYLCISVHPFILIF. Residues 286–307 lie on the Cytoplasmic side of the membrane; it reads SNLKLRSVFSQLLLLARGFWVA.

It belongs to the G-protein coupled receptor T2R family.

It localises to the membrane. In terms of biological role, receptor that may play a role in the perception of bitterness and is gustducin-linked. May play a role in sensing the chemical composition of the gastrointestinal content. The activity of this receptor may stimulate alpha gustducin, mediate PLC-beta-2 activation and lead to the gating of TRPM5. The sequence is that of Taste receptor type 2 member 41 (TAS2R41) from Pan troglodytes (Chimpanzee).